The chain runs to 213 residues: Large ribosomal subunit protein uL1 (213 aa).

This sequence belongs to the universal ribosomal protein uL1 family. In terms of assembly, part of the 50S ribosomal subunit.

Binds directly to 23S rRNA. Probably involved in E site tRNA release. Its function is as follows. Protein L1 is also a translational repressor protein, it controls the translation of its operon by binding to its mRNA. The chain is Large ribosomal subunit protein uL1 from Methanosarcina acetivorans (strain ATCC 35395 / DSM 2834 / JCM 12185 / C2A).